Here is a 415-residue protein sequence, read N- to C-terminus: MSEVSVKAKLAKEAAAEMIMKTTAEKDEALSLIANGLRKELDFLLAENAKDIVNGKENGLTPDIIDRLSLDEKRIRDIADAVELLIDLADPIGDSLETIEKENGLFIEKIRVPLGVVGMIYEARPNVTVDAATLCLKTGNAVVLRGSSSAIHSNKALVSVIYRALEQSALPIHAVQLIEDTSRETAKELFTLNDGLDVLIPRGGKKLIDLVVRESTVPVLETGAGNCHIFIDETAKPQMAEKVVVNAKTQRPSVCNAIESLLIHKAWARQHGKELLDQLENAGVEIRGDELVCELHPSSKQASKEDWETEFLAPVLSVKTVENVQEAVKHIQQYGTNHSEAILTENDKNAVYFQTAVDAAAVYHNASTRFTDGFEFGYGAEIGISTQKLHARGPMGLPALTSTKYIIKGTGQIRE.

It belongs to the gamma-glutamyl phosphate reductase family.

It localises to the cytoplasm. It catalyses the reaction L-glutamate 5-semialdehyde + phosphate + NADP(+) = L-glutamyl 5-phosphate + NADPH + H(+). Its pathway is amino-acid biosynthesis; L-proline biosynthesis; L-glutamate 5-semialdehyde from L-glutamate: step 2/2. Its function is as follows. Catalyzes the NADPH-dependent reduction of L-glutamate 5-phosphate into L-glutamate 5-semialdehyde and phosphate. The product spontaneously undergoes cyclization to form 1-pyrroline-5-carboxylate. The chain is Gamma-glutamyl phosphate reductase from Bacillus subtilis (strain 168).